The following is a 448-amino-acid chain: Zinc finger and BTB domain-containing protein 14 (448 aa).

In terms of domain architecture, BTB spans 36–102 (CDIAIVVEDV…MYTAKISVKK (67 aa)). The Nuclear localization signal signature appears at 50–66 (HRCVLAACSTYFKKLFK). Residues 130-193 (VSSPEENTQS…QEDGKSPTTT (64 aa)) form a disordered region. Residues 156-167 (DTQDDEVEEIGD) show a composition bias toward acidic residues. 5 C2H2-type zinc fingers span residues 275-302 (IVCQACGKTFSDEARLRKHEKLHTADRP), 303-330 (FVCEMCTKGFTTQAHLKEHLKIHTGYKP), 331-358 (YSCEVCGKSFIRAPDLKKHERVHSNERP), 359-386 (FACHMCDKAFKHKSHLKDHERRHRGEKP), and 387-415 (FVCGSCTKAFAKASDLKRHENNMHSERKQ). Residues 404–415 (RHENNMHSERKQ) show a composition bias toward basic and acidic residues. The segment at 404 to 425 (RHENNMHSERKQVTTANSIQSE) is disordered. Over residues 416–425 (VTTANSIQSE) the composition is skewed to polar residues.

It belongs to the krueppel C2H2-type zinc-finger protein family. As to quaternary structure, interacts with ZBTB21.

Its subcellular location is the nucleus. In terms of biological role, transcriptional activator of the dopamine transporter (DAT), binding it's promoter at the consensus sequence 5'-CCTGCACAGTTCACGGA-3'. Binds to 5'-d(GCC)(n)-3' trinucleotide repeats in promoter regions and acts as a repressor of the FMR1 gene. Transcriptional repressor of MYC and thymidine kinase promoters. This is Zinc finger and BTB domain-containing protein 14 (ZBTB14) from Gallus gallus (Chicken).